The primary structure comprises 165 residues: E3 ubiquitin ligase complex SCF subunit sconC (165 aa).

An interaction with the F-box domain of F-box proteins region spans residues 106–165 (ILAANYLDIKALLDVGCKTVANMIKGKSPEEIRKTFNIQNDFTPEEEDQIRRENEWAEDR).

Belongs to the SKP1 family. Component of the SCF (SKP1-CUL1-F-box protein) E3 ubiquitin ligase complexes.

The protein operates within protein modification; protein ubiquitination. In terms of biological role, essential component of the SCF (SKP1-CUL1-F-box protein) E3 ubiquitin ligase complexes, which mediate the ubiquitination and subsequent proteasomal degradation of target proteins. Controls sulfur metabolite repression, probably by mediating the inactivation or degradation of the metR transcription factor. In Arthroderma otae (Microsporum canis), this protein is E3 ubiquitin ligase complex SCF subunit sconC (sconC).